The chain runs to 502 residues: Hexose transporter 1 (502 aa).

Residues 1–26 lie on the Cytoplasmic side of the membrane; it reads MKKSSKEISSSQSLKNGGSDHFFNTS. A helical membrane pass occupies residues 27 to 47; it reads LMYVLAACLASFIFGYQVSVL. Residues 48–76 are Extracellular-facing; that stretch reads NTIKNFIVIEFGWCTGNKVECDDSTLKSS. The cysteines at positions 61 and 68 are disulfide-linked. The chain crosses the membrane as a helical span at residues 77–97; sequence FLLASVFIGAVVGSGFSGYLV. The Cytoplasmic portion of the chain corresponds to 98-102; it reads QHGRR. The helical transmembrane segment at 103–123 threads the bilayer; it reads FSLLVIYNFFILVSILTSITH. Over 124–132 the chain is Extracellular; sequence HFHTILFSR. Residues 133–153 traverse the membrane as a helical segment; it reads LLSGFGIGLITVSVPMYISEM. Residues 154-163 are Cytoplasmic-facing; it reads THKDKKGAYG. Residues 164–184 form a helical membrane-spanning segment; that stretch reads VLHQLFITFGIFVAVLLGMAM. Gln167 lines the alpha-D-glucose pocket. Gln167 contributes to the beta-D-glucose binding site. Residues 185 to 205 lie on the Extracellular side of the membrane; sequence GEAPDAKSVDALGEFQKIWWR. A helical membrane pass occupies residues 206-226; it reads LMFFFPCLISILGIVLLTFFY. The Cytoplasmic portion of the chain corresponds to 227–291; it reads KEETPYYLFE…RAMQIPSYRN (65 aa). A helical membrane pass occupies residues 292-312; the sequence is VILLGCILSGLQQFTGINVLV. Alpha-D-glucose contacts are provided by Gln303, Gln304, and Asn309. Gln303 is a binding site for beta-D-glucose. Asn309 serves as a coordination point for beta-D-glucose. The Extracellular segment spans residues 313–329; it reads SNSNELYKEFLSNKLIT. The chain crosses the membrane as a helical span at residues 330-350; the sequence is TLSVIMTVVNFLMTFPAIYIV. Beta-D-glucose is bound at residue Asn339. Residues 351–356 lie on the Cytoplasmic side of the membrane; the sequence is EKLGRK. A helical membrane pass occupies residues 357-377; sequence TLLLCGCAGVICAFLPTAIAN. Residues 378 to 390 lie on the Extracellular side of the membrane; the sequence is QIDSTSAFVKNLS. The chain crosses the membrane as a helical span at residues 391–411; it reads IAATFVMIISFAVSYGPVLWI. Trp410 is a binding site for alpha-D-glucose. Residues 412 to 427 lie on the Cytoplasmic side of the membrane; it reads YLHEMFPSEIKDSAAS. The helical transmembrane segment at 428–448 threads the bilayer; sequence LASLVNWVCAIIVVFPSDIII. Residues 449–453 are Extracellular-facing; sequence KKSPT. Residues 454-474 traverse the membrane as a helical segment; it reads ILFFIFSGMSILSFLFIFFFI. Over 475 to 502 the chain is Cytoplasmic; the sequence is KETKGGEIGTSPYITMEERQKHMGKSAV.

The protein belongs to the major facilitator superfamily. Sugar transporter (TC 2.A.1.1) family. As to quaternary structure, homodimer.

The protein localises to the cell membrane. The enzyme catalyses D-glucose(out) = D-glucose(in). The catalysed reaction is D-fructose(out) = D-fructose(in). It catalyses the reaction D-galactose(in) = D-galactose(out). It carries out the reaction D-mannose(out) = D-mannose(in). The enzyme catalyses D-glucosamine(out) = D-glucosamine(in). The catalysed reaction is D-xylose(out) = D-xylose(in). Inhibited by compound 3361 (3-O-((undec-10-en)-1-yl)-D-glucose). In terms of biological role, sodium-independent facilitative hexose transporter. Can transport D-glucose and D-fructose. Can transport D-mannose, D-galactose, D-xylose and D-glucosamine. The protein is Hexose transporter 1 of Plasmodium vivax (strain Brazil I).